Reading from the N-terminus, the 310-residue chain is Transcription initiation factor IIA subunit 1 (310 aa).

Disordered regions lie at residues 52–78, 91–197, and 218–261; these read AISN…LSTV, IQLN…NNKD, and VIPQ…DDPD. 2 stretches are compositionally biased toward low complexity: residues 62–77 and 122–160; these read TTAT…TLST and SNGT…PSSL. 3 stretches are compositionally biased toward acidic residues: residues 173–183, 225–236, and 246–261; these read TLDESDNDDDN, LNDDDDLDDEEI, and DSLG…DDPD.

The protein belongs to the TFIIA subunit 1 family. In terms of assembly, TFIIA is a heterodimer of the large subunit 1 and a small subunit gamma.

The protein localises to the nucleus. In terms of biological role, TFIIA is a component of the transcription machinery of RNA polymerase II and plays an important role in transcriptional activation. TFIIA in a complex with tbp mediates transcriptional activity. In Dictyostelium discoideum (Social amoeba), this protein is Transcription initiation factor IIA subunit 1 (gtf2a1).